A 303-amino-acid chain; its full sequence is DDRGK domain-containing protein 1 (303 aa).

Topologically, residues 1–2 are lumenal; that stretch reads MD. The helical transmembrane segment at 3–23 threads the bilayer; sequence LILLIGIATALLIILLTLYFL. Topologically, residues 24-303 are cytoplasmic; it reads QKRNAPAETK…TPVTASEGGA (280 aa). Disordered stretches follow at residues 31 to 53 and 84 to 160; these read ETKA…VPRR and AIDP…AEVE. Basic and acidic residues predominate over residues 106–160; it reads LDEKMGAKKRAKMEAKEQKRLQREQELHDREQRKVKEAKEEAERKQQDDLDAEVE.

This sequence belongs to the DDRGK1 family. Interacts with Atg9; the interaction is transient.

The protein resides in the endoplasmic reticulum membrane. Functionally, substrate adapter for ufmylation, the covalent attachment of the ubiquitin-like modifier UFM1 to substrate proteins. Required for ufmylation of Atg9; protects the nervous system during aging, possibly by stabilizing Atg9 and supporting its function. This Drosophila grimshawi (Hawaiian fruit fly) protein is DDRGK domain-containing protein 1.